A 64-amino-acid chain; its full sequence is Large ribosomal subunit protein bL35 (64 aa).

A disordered region spans residues M27–A47. Residues K36–H45 are compositionally biased toward basic residues.

It belongs to the bacterial ribosomal protein bL35 family.

This is Large ribosomal subunit protein bL35 from Chlorobium phaeobacteroides (strain DSM 266 / SMG 266 / 2430).